Reading from the N-terminus, the 390-residue chain is Dual-specificity RNA methyltransferase RlmN (390 aa).

Residue Glu110 is the Proton acceptor of the active site. A Radical SAM core domain is found at Glu116–Asp355. An intrachain disulfide couples Cys123 to Cys360. [4Fe-4S] cluster is bound by residues Cys130, Cys134, and Cys137. S-adenosyl-L-methionine-binding positions include Gly184 to Glu185, Ser216, Ser238 to His240, and Asn317. Cys360 (S-methylcysteine intermediate) is an active-site residue.

It belongs to the radical SAM superfamily. RlmN family. [4Fe-4S] cluster is required as a cofactor.

The protein localises to the cytoplasm. The catalysed reaction is adenosine(2503) in 23S rRNA + 2 reduced [2Fe-2S]-[ferredoxin] + 2 S-adenosyl-L-methionine = 2-methyladenosine(2503) in 23S rRNA + 5'-deoxyadenosine + L-methionine + 2 oxidized [2Fe-2S]-[ferredoxin] + S-adenosyl-L-homocysteine. It carries out the reaction adenosine(37) in tRNA + 2 reduced [2Fe-2S]-[ferredoxin] + 2 S-adenosyl-L-methionine = 2-methyladenosine(37) in tRNA + 5'-deoxyadenosine + L-methionine + 2 oxidized [2Fe-2S]-[ferredoxin] + S-adenosyl-L-homocysteine. Functionally, specifically methylates position 2 of adenine 2503 in 23S rRNA and position 2 of adenine 37 in tRNAs. m2A2503 modification seems to play a crucial role in the proofreading step occurring at the peptidyl transferase center and thus would serve to optimize ribosomal fidelity. The sequence is that of Dual-specificity RNA methyltransferase RlmN from Haemophilus influenzae (strain ATCC 51907 / DSM 11121 / KW20 / Rd).